Consider the following 39-residue polypeptide: Photosystem I reaction center subunit IX (39 aa).

A helical transmembrane segment spans residues 7–27; that stretch reads FLTTAPVAFILFSSFVFALFI.

This sequence belongs to the PsaJ family.

It localises to the cellular thylakoid membrane. Its function is as follows. May help in the organization of the PsaE and PsaF subunits. In Synechococcus sp. (strain JA-3-3Ab) (Cyanobacteria bacterium Yellowstone A-Prime), this protein is Photosystem I reaction center subunit IX.